Here is a 585-residue protein sequence, read N- to C-terminus: Sodium/calcium exchanger NCL (585 aa).

5 helical membrane passes run V83–G103, L106–A126, V149–G169, I212–T232, and V239–F259. 2 EF-hand domains span residues P299–E334 and D339–Q374. D312, N314, D316, H318, E323, D352, D356, Q358, and E363 together coordinate Ca(2+). A run of 2 helical transmembrane segments spans residues W427 to A447 and F457 to T477. N478 carries an N-linked (GlcNAc...) asparagine glycan. A run of 3 helical transmembrane segments spans residues C505 to V525, F532 to F552, and L558 to L578.

It belongs to the Ca(2+):cation antiporter (CaCA) (TC 2.A.19) family. In terms of tissue distribution, expressed in roots, leaves, stems, petals, stamens, ovules and siliques.

It is found in the cell membrane. It localises to the vacuole membrane. Its function is as follows. Possesses sodium/calcium exchanger (NCX) activity when expressed in a heterologous mammalian CHO-K1 cell system. Does not possess cation/proton exchanger (CAX) or sodium/proton (NHX) activity when expressed in a heterologous yeast cell system. Has the ability to bind calcium in vitro. Participates in the maintenance of calcium homeostasis. May play a role in auxin response, diurnal rhythm and flowering time. Involved in salt stress response. This Arabidopsis thaliana (Mouse-ear cress) protein is Sodium/calcium exchanger NCL.